The following is a 378-amino-acid chain: Deoxyguanosinetriphosphate triphosphohydrolase-like protein (378 aa).

Residues 1–28 form a disordered region; that stretch reads MLAPFACQPGESRGRQKPESMSTFRSPF. Positions 62–198 constitute an HD domain; sequence RLTHSIEVAQ…AAIADDVAYS (137 aa).

Belongs to the dGTPase family. Type 2 subfamily.

The protein is Deoxyguanosinetriphosphate triphosphohydrolase-like protein of Cereibacter sphaeroides (strain ATCC 17029 / ATH 2.4.9) (Rhodobacter sphaeroides).